Consider the following 2135-residue polypeptide: Plexin-B1 (2135 aa).

The N-terminal stretch at 1–19 is a signal peptide; that stretch reads MPALGPALLQALWAGWVLT. One can recognise a Sema domain in the interval 20-479; that stretch reads LQPLPPTAFT…TQSTLLKVPV (460 aa). Residues 20-1490 are Extracellular-facing; it reads LQPLPPTAFT…SPGAFPVAAQ (1471 aa). A glycan (N-linked (GlcNAc...) asparagine) is linked at N31. 9 disulfide bridges follow: C79–C88, C111–C119, C252–C377, C268–C322, C340–C364, C482–C499, C488–C533, C491–C508, and C502–C514. N334 carries an N-linked (GlcNAc...) asparagine glycan. Residue N543 is glycosylated (N-linked (GlcNAc...) asparagine). C570 and C588 form a disulfide bridge. 2 disordered regions span residues 671–829 and 849–884; these read MVAS…TTFP and LPEA…PPAP. Over residues 681 to 697 the composition is skewed to pro residues; sequence SPDPPARGGPSPSPPTA. Low complexity-rich tracts occupy residues 698–710 and 734–754; these read PKAL…DTLP and SPWG…TGSP. IPT/TIG domains follow at residues 1070 to 1160, 1162 to 1249, and 1252 to 1375; these read PLIH…FAYQ, PKVH…FKYT, and PNIT…FSYE. N-linked (GlcNAc...) asparagine glycans are attached at residues N1183, N1253, and N1330. Residues 1491–1511 form a helical membrane-spanning segment; it reads VGLGVGTSLLALGVIIIVLMY. A coiled-coil region spans residues 1507–1539; that stretch reads IVLMYRRKSKQALRDYKKVQIQLENLESSVRDR. Residues 1512–2135 lie on the Cytoplasmic side of the membrane; the sequence is RRKSKQALRD…AAVENKVTDL (624 aa). The interval 1883–1908 is disordered; sequence PWHLVKPSDEPEPPRPRRGSLRGGER. Residues 1888 to 1897 are compositionally biased toward basic and acidic residues; the sequence is KPSDEPEPPR.

Belongs to the plexin family. In terms of assembly, monomer, and heterodimer with PLXNB2 after proteolytic processing. Binds RAC1 that has been activated by GTP binding. Interaction with SEMA4D promotes binding of cytoplasmic ligands. Interacts with PLXNA1. Interacts with ARHGEF11 and ARHGEF12. Interacts with ERBB2. Interacts with MET. Interacts with MST1R. Interacts with RRAS. Interacts with RHOD. Interacts with RND1. Interacts with NRP1 and NRP2. Post-translationally, phosphorylated on tyrosine residues by ERBB2 and MET upon SEMA4D binding. In terms of processing, proteolytic processing favors heterodimerization with PLXNB2 and SEMA4D binding. In terms of tissue distribution, highly expressed in fetal kidney, and at slightly lower levels in fetal brain, lung and liver.

Its subcellular location is the cell membrane. The protein localises to the secreted. Receptor for SEMA4D. Plays a role in GABAergic synapse development. Mediates SEMA4A- and SEMA4D-dependent inhibitory synapse development. Plays a role in RHOA activation and subsequent changes of the actin cytoskeleton. Plays a role in axon guidance, invasive growth and cell migration. The sequence is that of Plexin-B1 (PLXNB1) from Homo sapiens (Human).